The primary structure comprises 595 residues: MTQQNAPKDLPPLSAEQLDRLQAISSDLSNLQLAWASGYLWNKASHSIPIDYTASQQVITVLSASQTGNARRLAVQLYEDLLAAQLSVVIINAGDYKFKQIAQEKWLLIVTSTQGDGDPPEEAIALYKYLFSKKAPVLNNIQFAIFGLGDSSYTYFAKIGKDFDSRLAELGAQRLYDRVDADVDYQEKADIWRREIVKILQTKLVTVNAKQQLSVINNRIEVKNNLYTKEEPFTAHLVVKQKITSRSSKKDIRHLEIDIAGSGLNYQPGDALGVWYENDPVLISEILELLGLTGNELVQVKEKNIPLNEALQKHYELTNNTAEIVKSYAYITRNSSLLALVDDQQQLKQFAFSTPFIDMIQRIPVELHPKQLLTLLRPLMPRLYSIASSQAEVGDEVHLTVSVVRYEIDGKIRTGGASSYLAYRLQESEPIRVFIEHNDNFRLPNNPNTAIIMIGSGTGIAPFRGFMQQREATTAKGKNWLFFGNQHLTDDFLYQVEWQRYIKNGLLNKIDVAWSQDQNKKIYVQDRLLEKGIELWNWIQDGAHIYVCGNANLMARDVEKALVKLIAIHGRMDYEQADEFLSELRIARRFQRDTY.

One can recognise a Flavodoxin-like domain in the interval 59–197 (ITVLSASQTG…KADIWRREIV (139 aa)). Residues 65-70 (SQTGNA), 112-115 (STQG), and 148-157 (LGDSSYTYFA) each bind FMN. The FAD-binding FR-type domain maps to 230-444 (EEPFTAHLVV…IEHNDNFRLP (215 aa)). Residues Thr-318, Phe-352, 382-385 (RLYS), 400-402 (TVS), Tyr-406, and 415-418 (GGAS) each bind FAD. NADP(+) contacts are provided by residues 515 to 516 (SQ), 521 to 525 (KIYVQ), and Asp-557. Tyr-595 contacts FAD.

It belongs to the NADPH-dependent sulphite reductase flavoprotein subunit CysJ family. This sequence in the N-terminal section; belongs to the flavodoxin family. In the C-terminal section; belongs to the flavoprotein pyridine nucleotide cytochrome reductase family. Alpha(8)-beta(8). The alpha component is a flavoprotein, the beta component is a hemoprotein. Requires FAD as cofactor. The cofactor is FMN.

It catalyses the reaction hydrogen sulfide + 3 NADP(+) + 3 H2O = sulfite + 3 NADPH + 4 H(+). The protein operates within sulfur metabolism; hydrogen sulfide biosynthesis; hydrogen sulfide from sulfite (NADPH route): step 1/1. Functionally, component of the sulfite reductase complex that catalyzes the 6-electron reduction of sulfite to sulfide. This is one of several activities required for the biosynthesis of L-cysteine from sulfate. The flavoprotein component catalyzes the electron flow from NADPH -&gt; FAD -&gt; FMN to the hemoprotein component. This is Sulfite reductase [NADPH] flavoprotein alpha-component from Baumannia cicadellinicola subsp. Homalodisca coagulata.